We begin with the raw amino-acid sequence, 60 residues long: Putative potassium channel blocker TXKS1 (60 aa).

Positions Met-1–Ala-28 are cleaved as a signal peptide. 3 disulfides stabilise this stretch: Cys-32-Cys-49, Cys-35-Cys-55, and Cys-39-Cys-57. Lysine amide is present on Lys-59.

As to expression, expressed by the venom gland.

It is found in the secreted. In terms of biological role, inhibits potassium channels. The protein is Putative potassium channel blocker TXKS1 of Olivierus martensii (Manchurian scorpion).